Here is a 454-residue protein sequence, read N- to C-terminus: Cobyrinate a,c-diamide synthase (454 aa).

Residues 244–435 form the GATase cobBQ-type domain; the sequence is KIAVAYDSAF…VHIHFLSNIA (192 aa). The active-site Nucleophile is Cys-327.

This sequence belongs to the CobB/CbiA family. The cofactor is Mg(2+).

The enzyme catalyses cob(II)yrinate + 2 L-glutamine + 2 ATP + 2 H2O = cob(II)yrinate a,c diamide + 2 L-glutamate + 2 ADP + 2 phosphate + 2 H(+). Its pathway is cofactor biosynthesis; adenosylcobalamin biosynthesis; cob(II)yrinate a,c-diamide from sirohydrochlorin (anaerobic route): step 10/10. Catalyzes the ATP-dependent amidation of the two carboxylate groups at positions a and c of cobyrinate, using either L-glutamine or ammonia as the nitrogen source. The chain is Cobyrinate a,c-diamide synthase from Thermoplasma volcanium (strain ATCC 51530 / DSM 4299 / JCM 9571 / NBRC 15438 / GSS1).